The chain runs to 432 residues: MTLWVLGLNHQTAPVDLRERAAFAGDALPRALESLRALPQVSEAALLSTCNRTELYAMADEARSLVNWLETHAPGLSGYLYQHQEAEAVRHLFRVATGLDSMVLGEPQILGQVKDAWAVARAHGALGSGLDRLFQQTFSVAKRARTDTRVGANPVSVASTAVRLAQESFARLNESTVLLIGAGETIELAAKHLSEGRVRRLLIANRTLAHAQTLASQHGGYALPLTDLERHLAEADVVFSATAAREPLVTRVQVEQALRARKRKPMLLFDLAVPRDIEASVDELSDAYLYTVDDLERAVEDNRRGRREAADQAEAIIDLQVARYVETLQATTRQAPLKRLRAFGDSTRDELLAKARQQLHNGKPTDEVLEQLAHALTNRLLHPPTAALRDAALNNDLELTTAADRLFPEKPGYQHPPIATPIVRTDDADPAP.

Substrate-binding positions include 49-52, Ser-101, 106-108, and Gln-112; these read TCNR and EPQ. Cys-50 acts as the Nucleophile in catalysis. 181–186 is an NADP(+) binding site; sequence GAGETI. Residues 407 to 432 form a disordered region; sequence FPEKPGYQHPPIATPIVRTDDADPAP.

This sequence belongs to the glutamyl-tRNA reductase family. As to quaternary structure, homodimer.

The catalysed reaction is (S)-4-amino-5-oxopentanoate + tRNA(Glu) + NADP(+) = L-glutamyl-tRNA(Glu) + NADPH + H(+). It functions in the pathway porphyrin-containing compound metabolism; protoporphyrin-IX biosynthesis; 5-aminolevulinate from L-glutamyl-tRNA(Glu): step 1/2. Its function is as follows. Catalyzes the NADPH-dependent reduction of glutamyl-tRNA(Glu) to glutamate 1-semialdehyde (GSA). The chain is Glutamyl-tRNA reductase from Xanthomonas oryzae pv. oryzae (strain PXO99A).